The primary structure comprises 90 residues: Small ribosomal subunit protein bS16 (90 aa).

The protein belongs to the bacterial ribosomal protein bS16 family.

The polypeptide is Small ribosomal subunit protein bS16 (Geobacillus thermodenitrificans (strain NG80-2)).